The sequence spans 667 residues: Beta-galactosidase LacZ (667 aa).

Substrate is bound at residue Arg-109. Cys-113 provides a ligand contact to Zn(2+). Asn-147 provides a ligand contact to substrate. The Proton donor role is filled by Glu-148. Zn(2+) contacts are provided by Cys-153, Cys-155, and Cys-158. The active-site Nucleophile is the Glu-307. Substrate is bound by residues Trp-315 and 355–358 (EKFH).

Belongs to the glycosyl hydrolase 42 family.

The enzyme catalyses Hydrolysis of terminal non-reducing beta-D-galactose residues in beta-D-galactosides.. Its function is as follows. Catalyzes the hydrolysis of lactose to its constituent monosaccharides glucose and galactose. This is Beta-galactosidase LacZ from Lactobacillus acidophilus (strain ATCC 700396 / NCK56 / N2 / NCFM).